Here is a 559-residue protein sequence, read N- to C-terminus: (-)-drimenol synthase (559 aa).

Mg(2+) contacts are provided by D311, D315, D456, S460, and E464. The DDXXD motif signature appears at 311–315 (DDIYD).

This sequence belongs to the terpene synthase family. It depends on Mg(2+) as a cofactor.

It catalyses the reaction (2E,6E)-farnesyl diphosphate + H2O = (5S,9S,10S)-drim-7-en-11-ol + diphosphate. The protein operates within secondary metabolite biosynthesis; terpenoid biosynthesis. Its function is as follows. Catalyzes the conversion of (2E,6E)-farnesyl diphosphate (FPP) into drimenol, a precursor of the sesquiterpenoid polygodial. Polygodial has been shown to be an antifeedant for a number of herbivorous insects. This Persicaria hydropiper (Marshpepper knotweed) protein is (-)-drimenol synthase.